Here is a 143-residue protein sequence, read N- to C-terminus: Transmembrane protein 80 (143 aa).

4 helical membrane-spanning segments follow: residues 22–42, 47–67, 88–108, and 122–142; these read LLCL…LLLV, VFTY…LMGI, LAAS…FLLW, and PLLA…AAFV.

The protein resides in the membrane. It is found in the cell projection. It localises to the cilium. In Bos taurus (Bovine), this protein is Transmembrane protein 80 (TMEM80).